Consider the following 77-residue polypeptide: U8-lycotoxin-Ls1d (77 aa).

A signal peptide spans 1–20 (MKLIIFTGLVLFAIVSLIEA). Residues 21 to 26 (QAENEK) constitute a propeptide that is removed on maturation.

Belongs to the neurotoxin 19 (CSTX) family. 08 (U8-Lctx) subfamily. In terms of processing, contains 4 disulfide bonds. In terms of tissue distribution, expressed by the venom gland.

It is found in the secreted. This chain is U8-lycotoxin-Ls1d, found in Lycosa singoriensis (Wolf spider).